The chain runs to 154 residues: Stigma-specific STIG1-like protein 3 (154 aa).

The N-terminal stretch at 1 to 23 (MGHRNTVLTILLTISIAIMVLIA) is a signal peptide.

This sequence belongs to the STIG1 family.

In Arabidopsis thaliana (Mouse-ear cress), this protein is Stigma-specific STIG1-like protein 3.